Here is a 254-residue protein sequence, read N- to C-terminus: tRNA (guanine-N(7)-)-methyltransferase (254 aa).

Over residues 1-11 the composition is skewed to basic and acidic residues; sequence MSISDNSREEL. The segment at 1–25 is disordered; the sequence is MSISDNSREELGELPAGRPLQSEFN. Positions 83, 108, 135, and 158 each coordinate S-adenosyl-L-methionine. Residue Asp-158 is part of the active site. Lys-162 serves as a coordination point for substrate. An interaction with RNA region spans residues 164–169; sequence RHNKRR. Substrate-binding positions include Asp-194 and 232–235; that span reads TKFE.

Belongs to the class I-like SAM-binding methyltransferase superfamily. TrmB family.

The catalysed reaction is guanosine(46) in tRNA + S-adenosyl-L-methionine = N(7)-methylguanosine(46) in tRNA + S-adenosyl-L-homocysteine. It participates in tRNA modification; N(7)-methylguanine-tRNA biosynthesis. Its function is as follows. Catalyzes the formation of N(7)-methylguanine at position 46 (m7G46) in tRNA. This chain is tRNA (guanine-N(7)-)-methyltransferase, found in Corynebacterium efficiens (strain DSM 44549 / YS-314 / AJ 12310 / JCM 11189 / NBRC 100395).